A 475-amino-acid polypeptide reads, in one-letter code: Ribulose bisphosphate carboxylase large chain (475 aa).

A propeptide spanning residues 1–2 is cleaved from the precursor; it reads MS. Pro3 carries the N-acetylproline modification. Position 14 is an N6,N6,N6-trimethyllysine (Lys14). Substrate-binding residues include Asn123 and Thr173. Lys175 acts as the Proton acceptor in catalysis. Residue Lys177 coordinates substrate. Positions 201, 203, and 204 each coordinate Mg(2+). Lys201 is modified (N6-carboxylysine). His294 serves as the catalytic Proton acceptor. Arg295, His327, and Ser379 together coordinate substrate.

It belongs to the RuBisCO large chain family. Type I subfamily. Heterohexadecamer of 8 large chains and 8 small chains; disulfide-linked. The disulfide link is formed within the large subunit homodimers. Mg(2+) serves as cofactor. In terms of processing, the disulfide bond which can form in the large chain dimeric partners within the hexadecamer appears to be associated with oxidative stress and protein turnover.

The protein resides in the plastid. Its subcellular location is the chloroplast. It catalyses the reaction 2 (2R)-3-phosphoglycerate + 2 H(+) = D-ribulose 1,5-bisphosphate + CO2 + H2O. The catalysed reaction is D-ribulose 1,5-bisphosphate + O2 = 2-phosphoglycolate + (2R)-3-phosphoglycerate + 2 H(+). RuBisCO catalyzes two reactions: the carboxylation of D-ribulose 1,5-bisphosphate, the primary event in carbon dioxide fixation, as well as the oxidative fragmentation of the pentose substrate in the photorespiration process. Both reactions occur simultaneously and in competition at the same active site. The polypeptide is Ribulose bisphosphate carboxylase large chain (Mesostigma viride (Green alga)).